The primary structure comprises 390 residues: Probable tRNA pseudouridine synthase D (390 aa).

Catalysis depends on aspartate 93, which acts as the Nucleophile. The TRUD domain occupies tyrosine 166–proline 353.

This sequence belongs to the pseudouridine synthase TruD family.

It catalyses the reaction uridine(13) in tRNA = pseudouridine(13) in tRNA. Could be responsible for synthesis of pseudouridine from uracil-13 in transfer RNAs. This chain is Probable tRNA pseudouridine synthase D, found in Methanococcus maripaludis (strain C5 / ATCC BAA-1333).